Here is a 155-residue protein sequence, read N- to C-terminus: Large ribosomal subunit protein uL22 (155 aa).

Belongs to the universal ribosomal protein uL22 family. In terms of assembly, part of the 50S ribosomal subunit.

Functionally, this protein binds specifically to 23S rRNA. It makes multiple contacts with different domains of the 23S rRNA in the assembled 50S subunit and ribosome. In terms of biological role, the globular domain of the protein is located near the polypeptide exit tunnel on the outside of the subunit, while an extended beta-hairpin is found that lines the wall of the exit tunnel in the center of the 70S ribosome. This Pyrococcus furiosus (strain ATCC 43587 / DSM 3638 / JCM 8422 / Vc1) protein is Large ribosomal subunit protein uL22.